The sequence spans 233 residues: Putative N-acetylmannosamine-6-phosphate 2-epimerase (233 aa).

Belongs to the NanE family.

It carries out the reaction an N-acyl-D-glucosamine 6-phosphate = an N-acyl-D-mannosamine 6-phosphate. It participates in amino-sugar metabolism; N-acetylneuraminate degradation; D-fructose 6-phosphate from N-acetylneuraminate: step 3/5. Functionally, converts N-acetylmannosamine-6-phosphate (ManNAc-6-P) to N-acetylglucosamine-6-phosphate (GlcNAc-6-P). The polypeptide is Putative N-acetylmannosamine-6-phosphate 2-epimerase (Yersinia pseudotuberculosis serotype IB (strain PB1/+)).